Consider the following 143-residue polypeptide: 3-hydroxyacyl-[acyl-carrier-protein] dehydratase FabZ (143 aa).

The active site involves His-47.

It belongs to the thioester dehydratase family. FabZ subfamily.

It localises to the cytoplasm. The catalysed reaction is a (3R)-hydroxyacyl-[ACP] = a (2E)-enoyl-[ACP] + H2O. Its function is as follows. Involved in unsaturated fatty acids biosynthesis. Catalyzes the dehydration of short chain beta-hydroxyacyl-ACPs and long chain saturated and unsaturated beta-hydroxyacyl-ACPs. In Moorella thermoacetica (strain ATCC 39073 / JCM 9320), this protein is 3-hydroxyacyl-[acyl-carrier-protein] dehydratase FabZ.